The primary structure comprises 325 residues: Clavaminate synthase 2 (325 aa).

Residues His-145, Glu-147, and His-280 each coordinate Fe cation. Arg-294 serves as a coordination point for 2-oxoglutarate.

The protein belongs to the clavaminate synthase family. It depends on Fe(2+) as a cofactor.

It catalyses the reaction deoxyamidinoproclavaminate + 2-oxoglutarate + O2 = amidinoproclavaminate + succinate + CO2. It carries out the reaction proclavaminate + 2-oxoglutarate + O2 = dihydroclavaminate + succinate + CO2 + H2O. The catalysed reaction is dihydroclavaminate + 2-oxoglutarate + O2 = clavaminate + succinate + CO2 + H2O. It participates in antibiotic biosynthesis; clavulanate biosynthesis; clavulanate from D-glyceraldehyde 3-phosphate and L-arginine: step 3/8. It functions in the pathway antibiotic biosynthesis; clavulanate biosynthesis; clavulanate from D-glyceraldehyde 3-phosphate and L-arginine: step 5/8. The protein operates within antibiotic biosynthesis; clavulanate biosynthesis; clavulanate from D-glyceraldehyde 3-phosphate and L-arginine: step 6/8. In Streptomyces clavuligerus, this protein is Clavaminate synthase 2 (cs2).